A 192-amino-acid polypeptide reads, in one-letter code: Interleukin-18 (192 aa).

Positions 1–35 are excised as a propeptide; the sequence is MAAEPEDNCISFVEMKFINNTLYFVAENDEDLESD.

The protein belongs to the IL-1 family. As to quaternary structure, forms a ternary complex with ligand-binding receptor subunit IL18R1 and signaling receptor subunit IL18RAP at the plasma membrane. Mature IL18 first binds to IL18R1 forming a low affinity binary complex, which then interacts with IL18RAP to form a high affinity ternary complex that signals inside the cell. Interacts with cargo receptor TMED10; the interaction mediates the translocation from the cytoplasm into the ERGIC (endoplasmic reticulum-Golgi intermediate compartment) and thereby secretion. In terms of processing, the pro-IL-18 precursor is processed by CASP1, CASP4 or CASP5 to yield its mature, active form. The pro-IL-18 precursor features autoinhibitory interactions between the propeptide and the post-cleavage-site region, preventing recognition by the IL18R1 receptor. Processing by CASP1, CASP4 or CASP5 induces conformational changes to generate critical receptor-binding sites. The mature form is then secreted and released in the extracellular milieu by passing through the gasdermin-D (GSDMD) pore. In contrast, cleavage by CASP3 inactivates IL18.

Its subcellular location is the cytoplasm. The protein resides in the cytosol. It is found in the secreted. In terms of biological role, pro-inflammatory cytokine primarily involved in epithelial barrier repair, polarized T-helper 1 (Th1) cell and natural killer (NK) cell immune responses. Upon binding to IL18R1 and IL18RAP, forms a signaling ternary complex which activates NF-kappa-B, triggering synthesis of inflammatory mediators. Synergizes with IL12/interleukin-12 to induce IFNG synthesis from T-helper 1 (Th1) cells and natural killer (NK) cells. Involved in transduction of inflammation downstream of pyroptosis: its mature form is specifically released in the extracellular milieu by passing through the gasdermin-D (GSDMD) pore. This is Interleukin-18 (IL18) from Sus scrofa (Pig).